We begin with the raw amino-acid sequence, 84 residues long: MVVIRLARGGAKKRPFYNMVVTDSRNRRDGRFVERIGFYNPVASGNAEALRVSVDRLAYWQSNGAQLSPTVARLVKQHAAQQAA.

Belongs to the bacterial ribosomal protein bS16 family.

This chain is Small ribosomal subunit protein bS16, found in Dechloromonas aromatica (strain RCB).